We begin with the raw amino-acid sequence, 126 residues long: Glycine cleavage system H protein (126 aa).

The Lipoyl-binding domain occupies 24–105; it reads TLTVGITDHA…AYGVWLFKIK (82 aa). Lys-65 bears the N6-lipoyllysine mark.

It belongs to the GcvH family. As to quaternary structure, the glycine cleavage system is composed of four proteins: P, T, L and H. (R)-lipoate serves as cofactor.

The glycine cleavage system catalyzes the degradation of glycine. The H protein shuttles the methylamine group of glycine from the P protein to the T protein. In Burkholderia cenocepacia (strain HI2424), this protein is Glycine cleavage system H protein.